A 95-amino-acid chain; its full sequence is Large ribosomal subunit protein uL23 (95 aa).

This sequence belongs to the universal ribosomal protein uL23 family. In terms of assembly, part of the 50S ribosomal subunit. Contacts protein L29.

Functionally, binds to 23S rRNA. One of the proteins that surrounds the polypeptide exit tunnel on the outside of the ribosome. The protein is Large ribosomal subunit protein uL23 of Methanopyrus kandleri (strain AV19 / DSM 6324 / JCM 9639 / NBRC 100938).